Reading from the N-terminus, the 310-residue chain is tRNA-cytidine(32) 2-sulfurtransferase (310 aa).

The PP-loop motif motif lies at 47–52 (SGGKDS). Positions 122, 125, and 213 each coordinate [4Fe-4S] cluster.

Belongs to the TtcA family. As to quaternary structure, homodimer. Mg(2+) is required as a cofactor. The cofactor is [4Fe-4S] cluster.

The protein resides in the cytoplasm. The enzyme catalyses cytidine(32) in tRNA + S-sulfanyl-L-cysteinyl-[cysteine desulfurase] + AH2 + ATP = 2-thiocytidine(32) in tRNA + L-cysteinyl-[cysteine desulfurase] + A + AMP + diphosphate + H(+). Its pathway is tRNA modification. In terms of biological role, catalyzes the ATP-dependent 2-thiolation of cytidine in position 32 of tRNA, to form 2-thiocytidine (s(2)C32). The sulfur atoms are provided by the cysteine/cysteine desulfurase (IscS) system. This Haemophilus influenzae (strain 86-028NP) protein is tRNA-cytidine(32) 2-sulfurtransferase.